The chain runs to 165 residues: Neurotrophin-3 (165 aa).

The N-terminal stretch at 1–3 (IQS) is a signal peptide. Positions 4–119 (TSMDQGSLSE…VLNQTSRRKR (116 aa)) are excised as a propeptide. Asn-112 carries N-linked (GlcNAc...) asparagine glycosylation.

It belongs to the NGF-beta family.

It localises to the secreted. Functionally, seems to promote the survival of visceral and proprioceptive sensory neurons. The chain is Neurotrophin-3 (NTF3) from Morelia spilota (Carpet python).